Consider the following 347-residue polypeptide: Heat-inducible transcription repressor HrcA (347 aa).

Belongs to the HrcA family.

Its function is as follows. Negative regulator of class I heat shock genes (grpE-dnaK-dnaJ and groELS operons). Prevents heat-shock induction of these operons. The polypeptide is Heat-inducible transcription repressor HrcA (Lactococcus lactis subsp. cremoris (strain SK11)).